We begin with the raw amino-acid sequence, 297 residues long: 4-hydroxy-tetrahydrodipicolinate synthase (297 aa).

A pyruvate-binding site is contributed by threonine 47. Tyrosine 136 (proton donor/acceptor) is an active-site residue. Lysine 165 functions as the Schiff-base intermediate with substrate in the catalytic mechanism. Isoleucine 206 lines the pyruvate pocket.

This sequence belongs to the DapA family. Homotetramer; dimer of dimers.

The protein resides in the cytoplasm. The catalysed reaction is L-aspartate 4-semialdehyde + pyruvate = (2S,4S)-4-hydroxy-2,3,4,5-tetrahydrodipicolinate + H2O + H(+). It functions in the pathway amino-acid biosynthesis; L-lysine biosynthesis via DAP pathway; (S)-tetrahydrodipicolinate from L-aspartate: step 3/4. Catalyzes the condensation of (S)-aspartate-beta-semialdehyde [(S)-ASA] and pyruvate to 4-hydroxy-tetrahydrodipicolinate (HTPA). The protein is 4-hydroxy-tetrahydrodipicolinate synthase of Campylobacter curvus (strain 525.92).